The sequence spans 356 residues: MSTVTITDLARENVRNLTPYQSARRLGGNGDVWLNANEYPTAVEFQLTQQTLNRYPECQPKAVIENYAQYAGVKPEQVLVSRGADEGIELLIRAFCEPGKDAILYCPPTYGMYSVSAETIGVECRTVPTLDNWQLDLQGISDKLDGVKVVYVCSPNNPTGQLINPQDFRTLLELTRGKAIVVADEAYIEFCPQASLAGWLAEYPHLAILRTLSKAFALAGLRCGFTLANEEVINLLMKVIAPYPLSTPVADIAAQALSPQGIVAMRERVAQIIAEREYLIAALKKISCVEQVFDSETNYILARFKASSAVFKSLWDQGIILRDQNKQPSLSGCLRITVGTREESQRVIDALRAEQV.

Residue Lys-214 is modified to N6-(pyridoxal phosphate)lysine.

It belongs to the class-II pyridoxal-phosphate-dependent aminotransferase family. Histidinol-phosphate aminotransferase subfamily. As to quaternary structure, homodimer. Pyridoxal 5'-phosphate is required as a cofactor.

It catalyses the reaction L-histidinol phosphate + 2-oxoglutarate = 3-(imidazol-4-yl)-2-oxopropyl phosphate + L-glutamate. It functions in the pathway amino-acid biosynthesis; L-histidine biosynthesis; L-histidine from 5-phospho-alpha-D-ribose 1-diphosphate: step 7/9. This Escherichia coli O9:H4 (strain HS) protein is Histidinol-phosphate aminotransferase.